The following is a 651-amino-acid chain: Probable inactive purple acid phosphatase 9 (651 aa).

The signal sequence occupies residues 1 to 20; sequence MIAAVYTLFFFFLLISSVYS. N-linked (GlcNAc...) asparagine glycosylation is found at Asn-32, Asn-96, and Asn-202. Asp-305 and Tyr-308 together coordinate Fe cation. Asp-305 contributes to the Zn(2+) binding site. Asn-338 serves as a coordination point for Zn(2+). Asn-338 contributes to the substrate binding site. N-linked (GlcNAc...) asparagine glycans are attached at residues Asn-378 and Asn-432. His-444 contacts Zn(2+). Asn-475 carries an N-linked (GlcNAc...) asparagine glycan. A Zn(2+)-binding site is contributed by His-483. 483–485 contacts substrate; that stretch reads HVH. His-485 contributes to the Fe cation binding site. Residues Asn-495 and Asn-640 are each glycosylated (N-linked (GlcNAc...) asparagine).

It belongs to the metallophosphoesterase superfamily. Purple acid phosphatase family. Homodimer. The cofactor is Fe cation. It depends on Zn(2+) as a cofactor. In terms of tissue distribution, expressed in roots, stems, leaves, flowers and siliques.

It is found in the secreted. This is Probable inactive purple acid phosphatase 9 (PAP9) from Arabidopsis thaliana (Mouse-ear cress).